A 126-amino-acid chain; its full sequence is Large ribosomal subunit protein uL14m (126 aa).

Belongs to the universal ribosomal protein uL14 family. Component of the mitochondrial large ribosomal subunit (mt-LSU). Mature yeast 74S mitochondrial ribosomes consist of a small (37S) and a large (54S) subunit. The 37S small subunit contains a 15S ribosomal RNA (15S mt-rRNA) and at least 32 different proteins. The 54S large subunit contains a 21S rRNA (21S mt-rRNA) and at least 45 different proteins.

The protein resides in the mitochondrion. Its function is as follows. Component of the mitochondrial ribosome (mitoribosome), a dedicated translation machinery responsible for the synthesis of mitochondrial genome-encoded proteins, including at least some of the essential transmembrane subunits of the mitochondrial respiratory chain. The mitoribosomes are attached to the mitochondrial inner membrane and translation products are cotranslationally integrated into the membrane. This chain is Large ribosomal subunit protein uL14m (mrpl38), found in Schizosaccharomyces pombe (strain 972 / ATCC 24843) (Fission yeast).